The primary structure comprises 193 residues: Acyl carrier protein phosphodiesterase (193 aa).

The protein belongs to the AcpH family.

It carries out the reaction holo-[ACP] + H2O = apo-[ACP] + (R)-4'-phosphopantetheine + H(+). Functionally, converts holo-ACP to apo-ACP by hydrolytic cleavage of the phosphopantetheine prosthetic group from ACP. The protein is Acyl carrier protein phosphodiesterase of Yersinia pestis.